The primary structure comprises 444 residues: 3-isopropylmalate dehydratase large subunit (444 aa).

Residues Xaa-348, Cys-408, and Xaa-411 each contribute to the [4Fe-4S] cluster site. The segment at 423–444 (ERXXSHSNRNFEGRQGRGGRTH) is disordered.

It belongs to the aconitase/IPM isomerase family. LeuC type 1 subfamily. In terms of assembly, heterodimer of LeuC and LeuD. Requires [4Fe-4S] cluster as cofactor.

It catalyses the reaction (2R,3S)-3-isopropylmalate = (2S)-2-isopropylmalate. Its pathway is amino-acid biosynthesis; L-leucine biosynthesis; L-leucine from 3-methyl-2-oxobutanoate: step 2/4. Its function is as follows. Catalyzes the isomerization between 2-isopropylmalate and 3-isopropylmalate, via the formation of 2-isopropylmaleate. In Buchnera aphidicola subsp. Uroleucon rudbeckiae, this protein is 3-isopropylmalate dehydratase large subunit.